The chain runs to 193 residues: Holliday junction branch migration complex subunit RuvA (193 aa).

Residues 1 to 64 (MIGRIAGILL…EDAHLLYGFL (64 aa)) are domain I. A domain II region spans residues 65 to 139 (TPQERTTFRE…GKLGADLGAL (75 aa)). The flexible linker stretch occupies residues 139 to 143 (LAGAA). The domain III stretch occupies residues 144-193 (SQSDHATDILNALVALGYSEKEGLAAIKNVPAGTGVSEGIKLALKALSKV).

The protein belongs to the RuvA family. As to quaternary structure, homotetramer. Forms an RuvA(8)-RuvB(12)-Holliday junction (HJ) complex. HJ DNA is sandwiched between 2 RuvA tetramers; dsDNA enters through RuvA and exits via RuvB. An RuvB hexamer assembles on each DNA strand where it exits the tetramer. Each RuvB hexamer is contacted by two RuvA subunits (via domain III) on 2 adjacent RuvB subunits; this complex drives branch migration. In the full resolvosome a probable DNA-RuvA(4)-RuvB(12)-RuvC(2) complex forms which resolves the HJ.

Its subcellular location is the cytoplasm. In terms of biological role, the RuvA-RuvB-RuvC complex processes Holliday junction (HJ) DNA during genetic recombination and DNA repair, while the RuvA-RuvB complex plays an important role in the rescue of blocked DNA replication forks via replication fork reversal (RFR). RuvA specifically binds to HJ cruciform DNA, conferring on it an open structure. The RuvB hexamer acts as an ATP-dependent pump, pulling dsDNA into and through the RuvAB complex. HJ branch migration allows RuvC to scan DNA until it finds its consensus sequence, where it cleaves and resolves the cruciform DNA. The sequence is that of Holliday junction branch migration complex subunit RuvA from Burkholderia ambifaria (strain MC40-6).